We begin with the raw amino-acid sequence, 91 residues long: ATP synthase subunit c (91 aa).

2 consecutive transmembrane segments (helical) span residues 4–24 (FTMCVLAAGIGMALGTLGTGI) and 53–73 (IGLAMIESLAIYALVVCLIIL).

It belongs to the ATPase C chain family. F-type ATPases have 2 components, F(1) - the catalytic core - and F(0) - the membrane proton channel. F(1) has five subunits: alpha(3), beta(3), gamma(1), delta(1), epsilon(1). F(0) has three main subunits: a(1), b(2) and c(10-14). The alpha and beta chains form an alternating ring which encloses part of the gamma chain. F(1) is attached to F(0) by a central stalk formed by the gamma and epsilon chains, while a peripheral stalk is formed by the delta and b chains.

It is found in the cell inner membrane. Its function is as follows. F(1)F(0) ATP synthase produces ATP from ADP in the presence of a proton or sodium gradient. F-type ATPases consist of two structural domains, F(1) containing the extramembraneous catalytic core and F(0) containing the membrane proton channel, linked together by a central stalk and a peripheral stalk. During catalysis, ATP synthesis in the catalytic domain of F(1) is coupled via a rotary mechanism of the central stalk subunits to proton translocation. In terms of biological role, key component of the F(0) channel; it plays a direct role in translocation across the membrane. A homomeric c-ring of between 10-14 subunits forms the central stalk rotor element with the F(1) delta and epsilon subunits. The protein is ATP synthase subunit c of Geotalea daltonii (strain DSM 22248 / JCM 15807 / FRC-32) (Geobacter daltonii).